The following is a 1383-amino-acid chain: MGSGRGCETTAVPLLMAVAVAGGTAGHLYPGEVCPGMDIRNNLTRLHELENCSVIEGHLQILLMFKTRPEDFRDLSFPKLIMITDYLLLFRVYGLESLKDLFPNLTVIRGSRLFFNYALVIFEMVHLKELGLYNLMNITRGSVRIEKNNELCYLATIDWSRILDYVEDNYIVLNKDDNEECGDVCPGTAKGKTNCPATVINGQFVERCWTHSHCQKVCPTICKSHGCTAEGLCCHKECLGNCSEPDDPTKCVACRNFYLDGQCVETCPPPYYHFQDWRCVNFSFCQDLHYKCRNSRKPGCHQYVIHNNKCIPECPSGYTMNSSNLMCTPCLGPCPKVCQILEGEKTIDSVTSAQELRGCTVINGSLIINIRGGNNLAAELEANLGLIEEISGFLKIRRSYALVSLSFFRKLHLIRGETLEIGNYSFYALDNQNLRQLWDWNKHNLTITQGKLFFHYNPKLCLSEIHKMEEVSGTKGRQERNDIALKTNGDQASCENELLKFSFIRTSFDKILLRWEPYWPPDFRDLLGFMLFYKEAPYQNVTEFDGQDACGSNSWTVVDIDPPQRSNDPKSQTPSHPGWLMRGLKPWTQYAIFVKTLVTFSDERRTYGAKSDIIYVQTDATNPSVPLDPISVSNSSSQIILKWKPPSDPNGNITHYLVYWERQAEDSELFELDYCLKGLKLPSRTWSPPFESDDSQKHNQSEYDDSASECCSCPKTDSQILKELEESSFRKTFEDYLHNVVFVPRKTSSGNGAEDTRPSRKRRSLEEVGNVTATTPTLPDFPNISSTIAPTSHEEHRPFEKVVNKESLVISGLRHFTGYRIELQACNQDSPEERSGVAAYVSARTMPEAKADDIVGPVTHEIFENNVVHLMWQEPKEPNGLIVLYEVSYRRYGDEELHLCVSRKHFALERGCRLRGLSPGNYSVRVRATSLAGNGSWTEPTYFYVTDYLDVPSNIAKIIIGPLIFVFLFSVVIGSIYLFLRKRQPDGPMGPLYASSNPEYLSASDVFPSSVYVPDEWEVPREKITLLRELGQGSFGMVYEGNAKDIIKGEVETRVAVKTVNESASLRERIEFLNEASVMKGFTCHHVVRLLGVVSKGQPTLVVMELMAHGDLKSHLRSLRPDAENNPGRPPPTLQEMIQMTAEIADGMAYLNAKKFVHRDLAARNCMVAHDFTVKIGDFGMTRDIYETDYYRKGGKGLLPVRWMSPESLKDGVFTASSDMWSFGVVLWEITSLAEQPYQGLSNEQVLKFVMDGGYLDPPDNCPERLTDLMRMCWQFNPKMRPTFLEIVNLLKDDLHPSFPEVSFFYSEENKAPESEELEMEFEDMENVPLDRSSHCQREEAGCREGGSSLSIKRTYDEHIPYTHMNGGKKNGRVLTLPRSNPS.

The signal sequence occupies residues 1 to 26; sequence MGSGRGCETTAVPLLMAVAVAGGTAG. Extracellular segments lie at residues 27–759 and 764–957; these read HLYP…TRPS and SLEE…NIAK. A disulfide bridge links Cys-34 with Cys-52. N-linked (GlcNAc...) asparagine glycans are attached at residues Asn-42, Asn-51, Asn-104, and Asn-137. Disulfide bonds link Cys-152/Cys-181, Cys-185/Cys-208, Cys-195/Cys-214, Cys-218/Cys-227, Cys-222/Cys-233, Cys-234/Cys-242, Cys-238/Cys-251, Cys-254/Cys-263, and Cys-267/Cys-279. An N-linked (GlcNAc...) asparagine glycan is attached at Asn-241. Asn-281 carries N-linked (GlcNAc...) asparagine glycosylation. Disulfide bonds link Cys-285–Cys-310, Cys-292–Cys-300, Cys-314–Cys-327, Cys-330–Cys-334, and Cys-338–Cys-359. Residue Asn-321 is glycosylated (N-linked (GlcNAc...) asparagine). The N-linked (GlcNAc...) asparagine glycan is linked to Asn-363. At Ser-399 the chain carries Phosphoserine. Tyr-400 carries the post-translational modification Phosphotyrosine. At Ser-406 the chain carries Phosphoserine. N-linked (GlcNAc...) asparagine glycosylation is found at Asn-423 and Asn-444. Cys-461 and Cys-494 are joined by a disulfide. Residues Asn-540, Asn-634, Asn-652, and Asn-699 are each glycosylated (N-linked (GlcNAc...) asparagine). Residues 625–727 enclose the Fibronectin type-III 1 domain; that stretch reads VPLDPISVSN…SQILKELEES (103 aa). An intrachain disulfide couples Cys-675 to Cys-900. The interval 687–709 is disordered; the sequence is SPPFESDDSQKHNQSEYDDSASE. The tract at residues 734-742 is insulin-binding; sequence EDYLHNVVF. A disordered region spans residues 747-783; the sequence is TSSGNGAEDTRPSRKRRSLEEVGNVTATTPTLPDFPN. 2 Fibronectin type-III domains span residues 754-848 and 854-948; these read EDTR…TMPE and IVGP…VTDY. N-linked (GlcNAc...) asparagine glycans are attached at residues Asn-770, Asn-783, Asn-921, and Asn-934. Residues 771 to 783 show a composition bias toward polar residues; it reads VTATTPTLPDFPN. Residues 958–978 form a helical membrane-spanning segment; it reads IIIGPLIFVFLFSVVIGSIYL. Residues 979-1383 lie on the Cytoplasmic side of the membrane; sequence FLRKRQPDGP…VLTLPRSNPS (405 aa). An important for interaction with IRS1, SHC1 and STAT5B region spans residues 997-1000; it reads NPEY. The residue at position 1000 (Tyr-1000) is a Phosphotyrosine; by autocatalysis. Positions 1024-1299 constitute a Protein kinase domain; that stretch reads ITLLRELGQG…LLKDDLHPSF (276 aa). 2 residues coordinate ATP: Ser-1034 and Lys-1058. Lys-1080 is covalently cross-linked (Glycyl lysine isopeptide (Lys-Gly) (interchain with G-Cter in ubiquitin)). At Cys-1084 the chain carries S-nitrosocysteine. Residue 1105–1111 participates in ATP binding; it reads ELMAHGD. Asp-1160 (proton donor/acceptor) is an active-site residue. Residues 1164–1165 and Asp-1178 contribute to the ATP site; that span reads RN. Phosphotyrosine; by autocatalysis is present on residues Tyr-1186, Tyr-1190, Tyr-1191, Tyr-1356, and Tyr-1362. The tract at residues 1361-1383 is disordered; the sequence is PYTHMNGGKKNGRVLTLPRSNPS. Positions 1362–1365 are PIK3R1 binding; it reads YTHM.

It belongs to the protein kinase superfamily. Tyr protein kinase family. Insulin receptor subfamily. As to quaternary structure, tetramer of 2 alpha and 2 beta chains linked by disulfide bonds. The alpha chains carry the insulin-binding regions, while the beta chains carry the kinase domain. Forms a hybrid receptor with IGF1R, the hybrid is a tetramer consisting of 1 alpha chain and 1 beta chain of INSR and 1 alpha chain and 1 beta chain of IGF1R. Interacts with SORBS1 but dissociates from it following insulin stimulation. Binds SH2B2. Activated form of INSR interacts (via Tyr-1000) with the PTB/PID domains of IRS1 and SHC1. The sequences surrounding the phosphorylated NPXY motif contribute differentially to either IRS1 or SHC1 recognition. Interacts (via tyrosines in the C-terminus) with IRS2 (via PTB domain and 591-786 AA); the 591-786 would be the primary anchor of IRS2 to INSR while the PTB domain would have a stabilizing action on the interaction with INSR. Interacts with the SH2 domains of the 85 kDa regulatory subunit of PI3K (PIK3R1) in vitro, when autophosphorylated on tyrosine residues. Interacts with SOCS7. Interacts (via the phosphorylated Tyr-1000), with SOCS3. Interacts (via the phosphorylated Tyr-1186, Tyr-1190, Tyr-1191) with SOCS1. Interacts with ARRB2. Interacts with GRB10; this interaction blocks the association between IRS1/IRS2 and INSR, significantly reduces insulin-stimulated tyrosine phosphorylation of IRS1 and IRS2 and thus decreases insulin signaling. Interacts with PDPK1. Interacts (via Tyr-1191) with GRB14 (via BPS domain); this interaction protects the tyrosines in the activation loop from dephosphorylation, but promotes dephosphorylation of Tyr-1000, this results in decreased interaction with, and phosphorylation of, IRS1. Interacts (via subunit alpha) with ENPP1 (via 485-599 AA); this interaction blocks autophosphorylation. Interacts with PTPRE; this interaction is dependent of Tyr-1186, Tyr-1190 and Tyr-1191 of the INSR. Interacts with STAT5B (via SH2 domain). Interacts with PTPRF. Interacts with GRB7. Interacts with CAV2 (tyrosine-phosphorylated form); the interaction is increased with 'Tyr-27'phosphorylation of CAV2. Interacts with ATIC; ATIC together with PRKAA2/AMPK2 and HACD3/PTPLAD1 is proposed to be part of a signaling netwok regulating INSR autophosphorylation and endocytosis. Interacts with the insulin receptor SORL1; this interaction strongly increases its surface exposure, hence strengthens insulin signal reception. Interacts (tyrosine phosphorylated) with CCDC88A/GIV (via SH2-like region); binding requires autophosphorylation of the Insr C-terminal region. Interacts with GNAI3; the interaction is probably mediated by CCDC88A/GIV. Interacts with LMBRD1. Interacts (in response to insulin stimulation) with NCK1; this interaction may recruit PTPN1 to mediate INSR dephosphorylation. Interacts with CD248; this interaction diminishes INSR autophosphorylation. In terms of processing, after being transported from the endoplasmic reticulum to the Golgi apparatus, the single glycosylated precursor is further glycosylated and then cleaved, followed by its transport to the plasma membrane. Post-translationally, autophosphorylated on tyrosine residues in response to insulin. Phosphorylation of Tyr-1000 is required for binding to IRS1, SHC1 and STAT5B. May also be phosphorylated at Tyr-1186 and Tyr-1191 by mTORC2. Dephosphorylated by PTPRE at Tyr-1000, Tyr-1186, Tyr-1190 and Tyr-1191. Dephosphorylated by PTPRF and PTPN1. Dephosphorylated by PTPN2; down-regulates insulin-induced signaling. S-nitrosylation at Cys-1084 by BLVRB inhibits the receptor tyrosine kinase, thereby inhibiting insulin signaling. In terms of processing, ubiquitinated by MARCHF1; leading to degradation thereby reducing surface INSR expression.

It localises to the cell membrane. It is found in the late endosome. The protein resides in the lysosome. It catalyses the reaction L-tyrosyl-[protein] + ATP = O-phospho-L-tyrosyl-[protein] + ADP + H(+). With respect to regulation, activated in response to insulin. Autophosphorylation activates the kinase activity. PTPN1, PTPRE and PTPRF dephosphorylate important tyrosine residues, thereby reducing INSR activity. Inhibited by ENPP1. GRB10 and GRB14 inhibit the catalytic activity of the INSR, they block access of substrates to the activated receptor. SOCS1 and SOCS3 act as negative regulators of INSR activity, they bind to the activated INRS and interfere with the phosphorylation of INSR substrates. Receptor tyrosine kinase which mediates the pleiotropic actions of insulin. Binding of insulin leads to phosphorylation of several intracellular substrates, including, insulin receptor substrates (IRS1, 2, 3, 4), SHC, GAB1, CBL and other signaling intermediates. Each of these phosphorylated proteins serve as docking proteins for other signaling proteins that contain Src-homology-2 domains (SH2 domain) that specifically recognize different phosphotyrosine residues, including the p85 regulatory subunit of PI3K and SHP2. Phosphorylation of IRSs proteins lead to the activation of two main signaling pathways: the PI3K-AKT/PKB pathway, which is responsible for most of the metabolic actions of insulin, and the Ras-MAPK pathway, which regulates expression of some genes and cooperates with the PI3K pathway to control cell growth and differentiation. Binding of the SH2 domains of PI3K to phosphotyrosines on IRS1 leads to the activation of PI3K and the generation of phosphatidylinositol-(3, 4, 5)-triphosphate (PIP3), a lipid second messenger, which activates several PIP3-dependent serine/threonine kinases, such as PDPK1 and subsequently AKT/PKB. The net effect of this pathway is to produce a translocation of the glucose transporter SLC2A4/GLUT4 from cytoplasmic vesicles to the cell membrane to facilitate glucose transport. Moreover, upon insulin stimulation, activated AKT/PKB is responsible for: anti-apoptotic effect of insulin by inducing phosphorylation of BAD; regulates the expression of gluconeogenic and lipogenic enzymes by controlling the activity of the winged helix or forkhead (FOX) class of transcription factors. Another pathway regulated by PI3K-AKT/PKB activation is mTORC1 signaling pathway which regulates cell growth and metabolism and integrates signals from insulin. AKT mediates insulin-stimulated protein synthesis by phosphorylating TSC2 thereby activating mTORC1 pathway. The Ras/RAF/MAP2K/MAPK pathway is mainly involved in mediating cell growth, survival and cellular differentiation of insulin. Phosphorylated IRS1 recruits GRB2/SOS complex, which triggers the activation of the Ras/RAF/MAP2K/MAPK pathway. In addition to binding insulin, the insulin receptor can bind insulin-like growth factors (IGFI and IGFII). When present in a hybrid receptor with IGF1R, binds IGF1. In adipocytes, inhibits lipolysis. This is Insulin receptor (Insr) from Rattus norvegicus (Rat).